The sequence spans 226 residues: V-type proton ATPase subunit E 2 (226 aa).

The protein belongs to the V-ATPase E subunit family. As to quaternary structure, V-ATPase is a heteromultimeric enzyme made up of two complexes: the ATP-hydrolytic V1 complex and the proton translocation V0 complex. The V1 complex consists of three catalytic AB heterodimers that form a heterohexamer, three peripheral stalks each consisting of EG heterodimers, one central rotor including subunits D and F, and the regulatory subunits C and H. The proton translocation complex V0 consists of the proton transport subunit a, a ring of proteolipid subunits c9c'', rotary subunit d, subunits e and f, and the accessory subunits ATP6AP1/Ac45 and ATP6AP2/PRR.

Subunit of the V1 complex of vacuolar(H+)-ATPase (V-ATPase), a multisubunit enzyme composed of a peripheral complex (V1) that hydrolyzes ATP and a membrane integral complex (V0) that translocates protons. V-ATPase is responsible for acidifying and maintaining the pH of intracellular compartments and in some cell types, is targeted to the plasma membrane, where it is responsible for acidifying the extracellular environment. The protein is V-type proton ATPase subunit E 2 (ATP6V1E2) of Bos taurus (Bovine).